We begin with the raw amino-acid sequence, 610 residues long: Zinc metalloproteinase-disintegrin-like halysase (610 aa).

A signal peptide spans methionine 1 to serine 20. Residues isoleucine 21 to alanine 182 constitute a propeptide that is removed on maturation. Residues lysine 199–proline 395 form the Peptidase M12B domain. N-linked (GlcNAc...) asparagine glycosylation is present at asparagine 218. Cystine bridges form between cysteine 310-cysteine 390, cysteine 350-cysteine 374, and cysteine 352-cysteine 357. Residue histidine 335 participates in Zn(2+) binding. Residue glutamate 336 is part of the active site. The Zn(2+) site is built by histidine 339 and histidine 345. Residues proline 403 to asparagine 488 enclose the Disintegrin domain. Residues valine 405, asparagine 408, phenylalanine 410, glutamate 412, glutamate 415, and aspartate 418 each contribute to the Ca(2+) site. Cystine bridges form between cysteine 406–cysteine 435, cysteine 417–cysteine 430, cysteine 419–cysteine 425, cysteine 429–cysteine 452, cysteine 443–cysteine 449, cysteine 448–cysteine 474, cysteine 461–cysteine 481, cysteine 468–cysteine 499, cysteine 492–cysteine 504, cysteine 511–cysteine 561, cysteine 526–cysteine 572, cysteine 539–cysteine 549, cysteine 556–cysteine 598, and cysteine 592–cysteine 603. Positions glutamate 467–aspartate 469 match the D/ECD-tripeptide motif.

Belongs to the venom metalloproteinase (M12B) family. P-III subfamily. P-IIIa sub-subfamily. In terms of assembly, monomer. The cofactor is Zn(2+). As to expression, expressed by the venom gland.

The protein localises to the secreted. With respect to regulation, inhibited by EDTA and EGTA. Not inhibited by PMSF, antipain, pepstatin, and iodoacetamide. Its function is as follows. Strongly inhibits the collagen-induced human platelet aggregation (inhibition of alpha-2/beta-1 (ITGA2/ITGB1) integrin). Hydrolyzes the Aalpha-chain of fibrinogen, without cleavage of Bbeta- and gamma-chains. Degrades type IV collagen (but not types I, II and V), fibronectin and vitronectin and also integrins alpha-1/beta-1 (ITGA1/ITGB1) and alpha-5/beta/1 (ITGA5/ITGB1) (but not alpha-V/beta-3 (ITGAV/ITGB3) and alpha-V/beta-5 (ITGAV/ITGB5) integrins). Both metalloproteinase (peptidase M12B) and disintegrin-like domains (recombinantly expressed and named halydin) play characteristic roles to inhibit human platelet aggregation. Induces apoptosis and strongly inhibits proliferation of endothelial cells as well as adhesion of the cells to extracellular matrix proteins. The apoptosis is closely associated with activation of caspase-3 and decreased level of Bcl-X(L)/Bax. Apohalysase, which lacks metalloprotease activity, is also able to induce the apoptosis. Cleaves insulin B chain at '34-His-|-Leu-35', '37-Glu-|-Ala-38', '38-Ala-|-Leu-39', '39-Leu-|-Tyr-40', '40-Tyr-|-Leu-41', '47-Gly-|-Phe-48' and '48-Phe-|-Phe-49' bonds. The sequence is that of Zinc metalloproteinase-disintegrin-like halysase from Gloydius halys (Chinese water mocassin).